The primary structure comprises 131 residues: Small ribosomal subunit protein uS8 (131 aa).

This sequence belongs to the universal ribosomal protein uS8 family. In terms of assembly, part of the 30S ribosomal subunit. Contacts proteins S5 and S12.

Its function is as follows. One of the primary rRNA binding proteins, it binds directly to 16S rRNA central domain where it helps coordinate assembly of the platform of the 30S subunit. The chain is Small ribosomal subunit protein uS8 from Chlorobium phaeobacteroides (strain DSM 266 / SMG 266 / 2430).